A 402-amino-acid polypeptide reads, in one-letter code: uncharacterized protein (402 aa).

A run of 12 helical transmembrane segments spans residues I23–V43, L52–L72, V90–I110, L121–G141, W158–V178, W180–L200, G228–Y248, A255–F275, L282–L302, W309–F329, L351–F371, and S375–H395.

It belongs to the major facilitator superfamily. YhhS family.

It localises to the cell inner membrane. This is an uncharacterized protein from Pseudomonas aeruginosa (strain UCBPP-PA14).